Here is a 294-residue protein sequence, read N- to C-terminus: Glutamate-binding protein GluB (294 aa).

Positions 1 to 26 (MSHKRMFTRLAAATSAAVLAGITLTA) are cleaved as a signal peptide. Residue Cys27 is the site of N-palmitoyl cysteine attachment. Residue Cys27 is the site of S-diacylglycerol cysteine attachment.

The protein belongs to the bacterial solute-binding protein 3 family. The complex is composed of two ATP-binding proteins (GluA), two transmembrane proteins (GluC and GluD) and a solute-binding protein (GluB).

The protein resides in the cell membrane. Functionally, part of the ABC transporter complex GluABCD involved in glutamate uptake. Binds glutamate with a high affinity. The sequence is that of Glutamate-binding protein GluB from Corynebacterium efficiens (strain DSM 44549 / YS-314 / AJ 12310 / JCM 11189 / NBRC 100395).